The primary structure comprises 214 residues: Large ribosomal subunit protein uL3 (214 aa).

The segment at 133-155 (ATHGNSRSHRVPGSTGQCQSPGR) is disordered. Glutamine 151 is modified (N5-methylglutamine).

This sequence belongs to the universal ribosomal protein uL3 family. As to quaternary structure, part of the 50S ribosomal subunit. Forms a cluster with proteins L14 and L19. Methylated by PrmB.

One of the primary rRNA binding proteins, it binds directly near the 3'-end of the 23S rRNA, where it nucleates assembly of the 50S subunit. The chain is Large ribosomal subunit protein uL3 from Cellvibrio japonicus (strain Ueda107) (Pseudomonas fluorescens subsp. cellulosa).